The chain runs to 637 residues: Limonene synthase, chloroplastic (637 aa).

The transit peptide at methionine 1–threonine 56 directs the protein to the chloroplast. Mg(2+) contacts are provided by aspartate 388, aspartate 392, and aspartate 540. A DDXXD motif motif is present at residues aspartate 388 to aspartate 392.

The protein belongs to the terpene synthase family. Tpsd subfamily. Mg(2+) serves as cofactor. It depends on Mn(2+) as a cofactor. The cofactor is K(+).

It localises to the plastid. It is found in the chloroplast. It catalyses the reaction (2E)-geranyl diphosphate = (4S)-limonene + diphosphate. Its pathway is terpene metabolism; oleoresin biosynthesis. Its function is as follows. Involved in defensive oleoresin formation in conifers in response to insect attack or other injury. Involved in monoterpene (C10) olefins biosynthesis. The protein is Limonene synthase, chloroplastic (ag10) of Abies grandis (Grand fir).